Here is a 194-residue protein sequence, read N- to C-terminus: Protein GrpE (194 aa).

2 stretches are compositionally biased toward basic and acidic residues: residues 1–19 (MSKE…ENTS) and 26–44 (KKEA…NQKL). The segment at 1-44 (MSKEEFPSEKNLDKEENTSKPKKAVKKEAAKGEETKKNNENQKL) is disordered.

Belongs to the GrpE family. In terms of assembly, homodimer.

It is found in the cytoplasm. Participates actively in the response to hyperosmotic and heat shock by preventing the aggregation of stress-denatured proteins, in association with DnaK and GrpE. It is the nucleotide exchange factor for DnaK and may function as a thermosensor. Unfolded proteins bind initially to DnaJ; upon interaction with the DnaJ-bound protein, DnaK hydrolyzes its bound ATP, resulting in the formation of a stable complex. GrpE releases ADP from DnaK; ATP binding to DnaK triggers the release of the substrate protein, thus completing the reaction cycle. Several rounds of ATP-dependent interactions between DnaJ, DnaK and GrpE are required for fully efficient folding. This Lactobacillus acidophilus (strain ATCC 700396 / NCK56 / N2 / NCFM) protein is Protein GrpE.